The primary structure comprises 396 residues: ATP phosphoribosyltransferase regulatory subunit (396 aa).

Belongs to the class-II aminoacyl-tRNA synthetase family. HisZ subfamily. In terms of assembly, heteromultimer composed of HisG and HisZ subunits.

Its subcellular location is the cytoplasm. It functions in the pathway amino-acid biosynthesis; L-histidine biosynthesis; L-histidine from 5-phospho-alpha-D-ribose 1-diphosphate: step 1/9. Its function is as follows. Required for the first step of histidine biosynthesis. May allow the feedback regulation of ATP phosphoribosyltransferase activity by histidine. The polypeptide is ATP phosphoribosyltransferase regulatory subunit (Alkaliphilus metalliredigens (strain QYMF)).